The chain runs to 316 residues: Glutathione synthetase (316 aa).

Residues 125–310 form the ATP-grasp domain; that stretch reads KLFTAWFSDL…ITGMLMDAIE (186 aa). 151 to 207 contacts ATP; that stretch reads WEKHSDIILKPLDGMGGASIFRVKEGDPNLGVIAETLTEHGTRYCMAQNYLPAIKDG. Glutamate 281 and asparagine 283 together coordinate Mg(2+).

This sequence belongs to the prokaryotic GSH synthase family. Requires Mg(2+) as cofactor. Mn(2+) serves as cofactor.

It carries out the reaction gamma-L-glutamyl-L-cysteine + glycine + ATP = glutathione + ADP + phosphate + H(+). It participates in sulfur metabolism; glutathione biosynthesis; glutathione from L-cysteine and L-glutamate: step 2/2. This is Glutathione synthetase from Escherichia coli O6:H1 (strain CFT073 / ATCC 700928 / UPEC).